Consider the following 153-residue polypeptide: Aspartate carbamoyltransferase regulatory chain (153 aa).

Zn(2+)-binding residues include cysteine 109, cysteine 114, cysteine 138, and cysteine 141.

It belongs to the PyrI family. As to quaternary structure, contains catalytic and regulatory chains. Zn(2+) is required as a cofactor.

Functionally, involved in allosteric regulation of aspartate carbamoyltransferase. The chain is Aspartate carbamoyltransferase regulatory chain from Klebsiella pneumoniae subsp. pneumoniae (strain ATCC 700721 / MGH 78578).